The primary structure comprises 290 residues: Protease HtpX homolog (290 aa).

Transmembrane regions (helical) follow at residues 4 to 24 (ILLF…VASL) and 39 to 59 (TALL…SLLI). H144 serves as a coordination point for Zn(2+). E145 is an active-site residue. Zn(2+) is bound at residue H148. The next 2 membrane-spanning stretches (helical) occupy residues 159-179 (LIQG…GYAV) and 199-219 (VSTI…VAWF). E224 is a binding site for Zn(2+).

The protein belongs to the peptidase M48B family. The cofactor is Zn(2+).

It localises to the cell inner membrane. The sequence is that of Protease HtpX homolog from Variovorax paradoxus (strain S110).